The chain runs to 37 residues: Large ribosomal subunit protein bL36 (37 aa).

Belongs to the bacterial ribosomal protein bL36 family.

In Thioalkalivibrio sulfidiphilus (strain HL-EbGR7), this protein is Large ribosomal subunit protein bL36.